A 53-amino-acid polypeptide reads, in one-letter code: IgA-inducing protein homolog (53 aa).

The N-terminal stretch at 1-30 is a signal peptide; that stretch reads MCSYYHMKKRSVSGCNITIFAVMFSHLSAG.

It is found in the secreted. Functionally, enhances IgA secretion from B-cells stimulated via CD40. The protein is IgA-inducing protein homolog (IGIP) of Homo sapiens (Human).